The following is a 272-amino-acid chain: Putative pyruvate, phosphate dikinase regulatory protein (272 aa).

154–161 (GVSRTSKS) contributes to the ADP binding site.

The protein belongs to the pyruvate, phosphate/water dikinase regulatory protein family. PDRP subfamily.

The enzyme catalyses N(tele)-phospho-L-histidyl/L-threonyl-[pyruvate, phosphate dikinase] + ADP = N(tele)-phospho-L-histidyl/O-phospho-L-threonyl-[pyruvate, phosphate dikinase] + AMP + H(+). The catalysed reaction is N(tele)-phospho-L-histidyl/O-phospho-L-threonyl-[pyruvate, phosphate dikinase] + phosphate + H(+) = N(tele)-phospho-L-histidyl/L-threonyl-[pyruvate, phosphate dikinase] + diphosphate. In terms of biological role, bifunctional serine/threonine kinase and phosphorylase involved in the regulation of the pyruvate, phosphate dikinase (PPDK) by catalyzing its phosphorylation/dephosphorylation. This Wolbachia sp. subsp. Brugia malayi (strain TRS) protein is Putative pyruvate, phosphate dikinase regulatory protein.